Reading from the N-terminus, the 106-residue chain is UPF0145 protein CLH_2273 (106 aa).

The protein belongs to the UPF0145 family.

The protein is UPF0145 protein CLH_2273 of Clostridium botulinum (strain Alaska E43 / Type E3).